Consider the following 230-residue polypeptide: Poxin (230 aa).

Histidine 43 (proton donor) is an active-site residue. Residue tyrosine 174 is the Shared with catalytic histidine of dimeric partner of the active site. The active-site Proton acceptor; shared with catalytic histidine of dimeric partner is the lysine 178.

The protein belongs to the poxin family. Homodimer.

It catalyses the reaction 2',3'-cGAMP + H2O = Gp(2'-5')Ap(3') + H(+). Functionally, nuclease that cleaves host 2',3'-cGAMP. In Orgyia pseudotsugata multicapsid polyhedrosis virus (OpMNPV), this protein is Poxin (P26).